A 406-amino-acid chain; its full sequence is MTTPANAQNASKTWELSLYELHRTPQEAIMDGTEIAVSPRSLHSELMCPICLDMLKNTMTTKECLHRFCSDCIVTALRSGNKECPTCRKKLVSKRSLRPDPNFDALISKIYPSREEYEAHQDRVLIRLSRLHNQQALSSSIEEGLRMQAMHRAQRVRRPMPGSDQTTTMSGGEGEPGEGEGDGEDISSDSAPDSAPGPAPKRPRGGGAGGSSVGTGGGAAGGACGGAGSEDSGDRGGTLGGGTLGPPSPPGAPSPPEPGGEIELVFRPHPLLVEKGEYCQTRYVKTTGNATVDHLSKYLALRIALERRQQQETVEPGGPGGGASDTGGPDGGGGERGVSGGGEGPEEPALPSLEGVSEKQYTIYIAPGGGAFTTLNGSLTLELVNEKFWKVSRPLELCYAPTKDPK.

Thr24 carries the post-translational modification Phosphothreonine. Residues 30–234 (MDGTEIAVSP…GGAGSEDSGD (205 aa)) form a necessary for transcriptional repression region. Phosphoserine is present on Ser38. The RING-type zinc-finger motif lies at 48-88 (CPICLDMLKNTMTTKECLHRFCSDCIVTALRSGNKECPTCR). Phosphoserine is present on residues Ser140, Ser187, and Ser190. Disordered stretches follow at residues 151–263 (HRAQ…GEIE) and 309–354 (QQQE…PSLE). Over residues 175–187 (EPGEGEGDGEDIS) the composition is skewed to acidic residues. Residues 201–204 (KRPR) carry the Nuclear localization signal motif. Over residues 205 to 228 (GGGAGGSSVGTGGGAAGGACGGAG) the composition is skewed to gly residues. Residue Thr215 is modified to Phosphothreonine. Phosphoserine occurs at positions 229 and 232. The interval 230–406 (EDSGDRGGTL…LCYAPTKDPK (177 aa)) is necessary for interaction with CBX2. Over residues 235-244 (RGGTLGGGTL) the composition is skewed to gly residues. The segment covering 246–258 (PPSPPGAPSPPEP) has biased composition (pro residues). A phosphoserine mark is found at Ser248 and Ser254. The span at 317 to 343 (GGPGGGASDTGGPDGGGGERGVSGGGE) shows a compositional bias: gly residues.

In terms of assembly, component of chromatin-associated Polycomb (PcG) complexes. Part of the E2F6.com-1 complex in G0 phase composed of E2F6, MGA, MAX, TFDP1, CBX3, BAT8, EUHMTASE1, RING1, RNF2/RING2 MBLR, L3MBTL2 and YAF2. Interacts with CBX2 and PCGF6. Component of a PRC1-like complex. Component of repressive BCOR complex containing Polycomb group subcomplex at least composed of RYBP, PCGF1, BCOR and RNF2/RING2. Interacts with BMI1, PHC2, PCGF2, RNF2; CBX6, CBX7 and CBX8. Interacts with MN1. Interacts with USP26.

The protein resides in the nucleus speckle. It carries out the reaction S-ubiquitinyl-[E2 ubiquitin-conjugating enzyme]-L-cysteine + [acceptor protein]-L-lysine = [E2 ubiquitin-conjugating enzyme]-L-cysteine + N(6)-ubiquitinyl-[acceptor protein]-L-lysine.. It functions in the pathway protein modification; protein ubiquitination. Constitutes one of the E3 ubiquitin-protein ligases that mediate monoubiquitination of 'Lys-119' of histone H2A, thereby playing a central role in histone code and gene regulation. H2A 'Lys-119' ubiquitination gives a specific tag for epigenetic transcriptional repression and participates in X chromosome inactivation of female mammals. Essential component of a Polycomb group (PcG) multiprotein PRC1-like complex, a complex class required to maintain the transcriptionally repressive state of many genes, including Hox genes, throughout development. PcG PRC1 complex acts via chromatin remodeling and modification of histones, rendering chromatin heritably changed in its expressibility. Compared to RNF2/RING2, it does not have the main E3 ubiquitin ligase activity on histone H2A, and it may rather act as a modulator of RNF2/RING2 activity. This Rattus norvegicus (Rat) protein is E3 ubiquitin-protein ligase RING1.